A 607-amino-acid polypeptide reads, in one-letter code: COMPASS component cclA (607 aa).

The span at M1 to P19 shows a compositional bias: low complexity. Disordered stretches follow at residues M1–H22 and G34–A86. Positions S57 to E69 are enriched in basic residues. The B30.2/SPRY domain occupies I157 to A376. Residues N587–G607 form a disordered region.

Belongs to the cclA family. As to quaternary structure, component of the COMPASS complex.

The protein localises to the nucleus. The protein resides in the chromosome. It localises to the telomere. Functionally, component of the COMPASS (Set1C) complex that specifically mono-, di- and trimethylates histone H3 to form H3K4me1/2/3, which subsequently plays a role in telomere length maintenance and transcription elongation regulation. Controls the production of several secondary metabolites, including monodictyphenone, emodin and emodin derivatives, as well as two anti-osteoporosis polyketides, F9775A and F9775B. The chain is COMPASS component cclA from Emericella nidulans (strain FGSC A4 / ATCC 38163 / CBS 112.46 / NRRL 194 / M139) (Aspergillus nidulans).